Reading from the N-terminus, the 365-residue chain is Histidinol-phosphate aminotransferase 2 (365 aa).

An N6-(pyridoxal phosphate)lysine modification is found at K222.

The protein belongs to the class-II pyridoxal-phosphate-dependent aminotransferase family. Histidinol-phosphate aminotransferase subfamily. As to quaternary structure, homodimer. Requires pyridoxal 5'-phosphate as cofactor.

The catalysed reaction is L-histidinol phosphate + 2-oxoglutarate = 3-(imidazol-4-yl)-2-oxopropyl phosphate + L-glutamate. The protein operates within amino-acid biosynthesis; L-histidine biosynthesis; L-histidine from 5-phospho-alpha-D-ribose 1-diphosphate: step 7/9. The sequence is that of Histidinol-phosphate aminotransferase 2 (hisC2) from Bordetella bronchiseptica (strain ATCC BAA-588 / NCTC 13252 / RB50) (Alcaligenes bronchisepticus).